Consider the following 170-residue polypeptide: MDFKDKKDDGILEKLVHINRITKVVKGGRRFGFSALVVVGNQAGKIGVAHAKAKQVPDAIKKANETARRVLIHVPLREGRTIHHDVYGKDGAGKIILRSAPKGTGIIAGGPVRAVCEVLGIKDIVAKSMGTSNPHNMIRATMKALSKQNSPKHIATIRNKKISDVIEKRG.

One can recognise an S5 DRBM domain in the interval Ile-11 to Val-74.

This sequence belongs to the universal ribosomal protein uS5 family. Part of the 30S ribosomal subunit. Contacts proteins S4 and S8.

With S4 and S12 plays an important role in translational accuracy. Functionally, located at the back of the 30S subunit body where it stabilizes the conformation of the head with respect to the body. The polypeptide is Small ribosomal subunit protein uS5 (Pelagibacter ubique (strain HTCC1062)).